The primary structure comprises 1011 residues: Lysosomal alpha-mannosidase (1011 aa).

The first 49 residues, 1–49, serve as a signal peptide directing secretion; it reads MGAYARASGVCARGCLDSAGPWTMSRALRPPLPPLCFFLLLLAAAGARA. 2 disulfide bridges follow: cysteine 55-cysteine 358 and cysteine 268-cysteine 273. Zn(2+)-binding residues include histidine 72 and aspartate 74. Residue asparagine 133 is glycosylated (N-linked (GlcNAc...) asparagine). Residue aspartate 196 participates in Zn(2+) binding. The active-site Nucleophile is aspartate 196. Residues asparagine 310 and asparagine 367 are each glycosylated (N-linked (GlcNAc...) asparagine). Intrachain disulfides connect cysteine 412–cysteine 472 and cysteine 493–cysteine 501. Zn(2+) is bound at residue histidine 446. N-linked (GlcNAc...) asparagine glycosylation is found at asparagine 497, asparagine 645, asparagine 651, asparagine 692, asparagine 766, asparagine 832, asparagine 930, and asparagine 989.

It belongs to the glycosyl hydrolase 38 family. Zn(2+) is required as a cofactor. Post-translationally, first processed into 3 peptides of 70 kDa, 42 kDa (D) and 13/15 kDa (E). The 70 kDa peptide is further processed into three peptides (A, B and C). The A, B and C peptides are disulfide-linked. In terms of processing, heavily glycosylated.

It is found in the lysosome. The enzyme catalyses Hydrolysis of terminal, non-reducing alpha-D-mannose residues in alpha-D-mannosides.. Its function is as follows. Necessary for the catabolism of N-linked carbohydrates released during glycoprotein turnover. Cleaves all known types of alpha-mannosidic linkages. This Homo sapiens (Human) protein is Lysosomal alpha-mannosidase (MAN2B1).